Here is a 578-residue protein sequence, read N- to C-terminus: Arginine--tRNA ligase (578 aa).

A 'HIGH' region motif is present at residues 127–137 (PNLAKEMHVGH).

It belongs to the class-I aminoacyl-tRNA synthetase family. As to quaternary structure, monomer.

It localises to the cytoplasm. The enzyme catalyses tRNA(Arg) + L-arginine + ATP = L-arginyl-tRNA(Arg) + AMP + diphosphate. This Pseudomonas fluorescens (strain Pf0-1) protein is Arginine--tRNA ligase.